We begin with the raw amino-acid sequence, 513 residues long: Histone acetyltransferase KAT5 (513 aa).

The Tudor-knot domain occupies 8 to 65 (IEGCRLPVLRRNQDNEDEWPLAEILSVKDISGRKLFYVHYIDFNKRLDEWVTHERLDL). N6-acetyllysine is present on lysine 52. The tract at residues 69–106 (QFPKKEAKTPTKNGLPGSRPGSPEREVPASAQASGKTL) is disordered. Phosphoserine; by GSK3 is present on serine 86. Phosphoserine; by CDK1 and CDK9 is present on serine 90. An N6-acetyllysine; by autocatalysis mark is found at lysine 104 and lysine 120. The tract at residues 122–220 (REAIPGGEPD…RMTGSLVSDR (99 aa)) is disordered. The span at 133 to 144 (PLSSSSCLQPNH) shows a compositional bias: polar residues. Lysine 148, lysine 150, lysine 187, and lysine 189 each carry N6-acetyllysine; by autocatalysis. Residue serine 199 is modified to Phosphoserine. In terms of domain architecture, MYST-type HAT spans 227 to 504 (TRMKNIECIE…IDSKCLHFTP (278 aa)). Residues 260–285 (LYLCEFCLKYGRSLKCLQRHLTKCDL) form a C2HC MYST-type zinc finger. Residue lysine 327 is modified to N6-acetyllysine; by autocatalysis. The segment at 368-513 (ACILTLPPYQ…PKDWSKRGKW (146 aa)) is interaction with ATF2. Residues 370–372 (ILT) and 377–383 (QRRGYGK) contribute to the acetyl-CoA site. Glutamate 403 functions as the Proton donor/acceptor in the catalytic mechanism. Residues serine 407 and serine 416 each coordinate acetyl-CoA. Residue lysine 430 forms a Glycyl lysine isopeptide (Lys-Gly) (interchain with G-Cter in SUMO1); alternate linkage. Residue lysine 430 forms a Glycyl lysine isopeptide (Lys-Gly) (interchain with G-Cter in SUMO2); alternate linkage. A Glycyl lysine isopeptide (Lys-Gly) (interchain with G-Cter in SUMO1) cross-link involves residue lysine 451.

The protein belongs to the MYST (SAS/MOZ) family. Component of the NuA4 histone acetyltransferase complex which contains the catalytic subunit KAT5/TIP60 and the subunits EP400, TRRAP/PAF400, BRD8/SMAP, EPC1, DMAP1/DNMAP1, RUVBL1/TIP49, RUVBL2, ING3, actin, ACTL6A/BAF53A, MORF4L1/MRG15, MORF4L2/MRGX, MRGBP, YEATS4/GAS41, VPS72/YL1 and MEAF6. KAT5/TIP60, EPC1, and ING3 together constitute a minimal HAT complex termed Piccolo NuA4. The NuA4 complex interacts with MYC. Interacts with ATM. Interacts with JADE1. Interacts with PLA2G4A/CPLA2, EDNRA and HDAC7. Interacts with the cytoplasmic tail of APP and APBB1/FE65. Interacts with TRIM24 and TRIM68. Forms a complex with SENP6 and UBE2I in response to UV irradiation. Identified in a complex with HINT1. Interacts with ATF2 and CUL3. Interacts with NR1D2 (via N-terminus). Component of a SWR1-like complex. Interacts with FOXP3. Interacts with ZBTB49. Interacts with SRF. Interacts with ATF3; promoting autoacetylation and deubiquitination by USP7. Interacts with EP300/p300; interaction promotes KAT5 autoacetylation. Interacts with PRKDC; interaction is impaired following KAT5 sumoylation. Interacts with GPR50. Interacts with NME3; this interaction enables recruitment of NME3 at DNA damage sites where it plays a role in the repair of DNA. In terms of assembly, (Microbial infection) Interacts with HIV-1 TAT. Phosphorylated on Ser-86 and Ser-90; enhanced during G2/M phase. The phosphorylated form has a higher activity. Phosphorylation at Ser-90 by CDK1 or CDK9 is a prerequisite for phosphorylation at Ser-86 by GSK3. Phosphorylation at Ser-86 by GSK3 (GSK3A or GSK3B) activates acetyltransferase and acyltransferase activities. Phosphorylation at Ser-90 by CDK9 promotes KAT5 recruitment to chromatin. Phosphorylation by VRK1 following DNA damage promotes KAT5 association with chromatin and histone acetyltransferase activity. In terms of processing, autoacetylated. Autoacetylation is required for histone acetyltransferase activity. Autoacetylation at Lys-327 is facilitated by interaction with EP300/p300: it prevents ubiquitination and subsequent degradation by the proteasome and promotes acetylation of target proteins. Deacetylated by HDAC3 and SIRT1. Deacetylation by HDAC3 promotes its ubiquitination and cytoplasmic localization. Post-translationally, sumoylated by UBE2I at Lys-430 and Lys-451, leading to increase of its histone acetyltransferase activity in UV-induced DNA damage response, as well as its translocation to nuclear bodies. Sumoylation with SUMO2 by PIAS4 at Lys-430 promotes repair of DNA double-strand breaks (DSBs) via homologous recombination (HR). Sumoylation by PIAS4 impairs interaction with PRKDC, inhibiting non-homologous end joining (NHEJ)-mediated repair of DSBs, thereby facilitating HR. Desumoylated by SENP3. Ubiquitinated by MDM2, leading to its proteasome-dependent degradation. Ubiquitination is prevented by autoacetylation at Lys-327. Ubiquitinated following deacetylation by HDAC3, leading to cytoplasmic localization. Deubiquitinated by USP7 following interaction with ATF3, promoting its stabilization. In terms of processing, (Microbial infection) In case of HIV-1 infection, interaction with the viral Tat protein leads to KAT5 polyubiquitination and targets it to degradation.

Its subcellular location is the nucleus. The protein localises to the chromosome. It is found in the cytoplasm. The protein resides in the centromere. It localises to the kinetochore. Its subcellular location is the cytoskeleton. The protein localises to the spindle pole. It is found in the nucleolus. The protein resides in the perinuclear region. The catalysed reaction is L-lysyl-[histone] + acetyl-CoA = N(6)-acetyl-L-lysyl-[histone] + CoA + H(+). The enzyme catalyses L-lysyl-[protein] + acetyl-CoA = N(6)-acetyl-L-lysyl-[protein] + CoA + H(+). It catalyses the reaction (2E)-butenoyl-CoA + L-lysyl-[protein] = N(6)-(2E)-butenoyl-L-lysyl-[protein] + CoA + H(+). It carries out the reaction 2-hydroxyisobutanoyl-CoA + L-lysyl-[protein] = N(6)-(2-hydroxyisobutanoyl)-L-lysyl-[protein] + CoA + H(+). The catalysed reaction is (S)-lactoyl-CoA + L-lysyl-[protein] = N(6)-[(S)-lactoyl]-L-lysyl-[protein] + CoA + H(+). Acyltransferase and acetyltransferase activities are activated by phosphorylation and autoacetylation. Autoacetylation activates the histone acetyltransferase activity. Catalytic subunit of the NuA4 histone acetyltransferase complex, a multiprotein complex involved in transcriptional activation of select genes principally by acetylation of nucleosomal histones H2A and H4. Histone acetylation alters nucleosome-DNA interactions and promotes interaction of the modified histones with other proteins which positively regulate transcription. The NuA4 histone acetyltransferase complex is required for the activation of transcriptional programs associated with proto-oncogene mediated growth induction, tumor suppressor mediated growth arrest and replicative senescence, apoptosis, and DNA repair. The NuA4 complex plays a direct role in repair of DNA double-strand breaks (DSBs) by promoting homologous recombination (HR): the complex inhibits TP53BP1 binding to chromatin via MBTD1, which recognizes and binds histone H4 trimethylated at 'Lys-20' (H4K20me), and KAT5 that catalyzes acetylation of 'Lys-15' of histone H2A (H2AK15ac), thereby blocking the ubiquitination mark required for TP53BP1 localization at DNA breaks. Also involved in DSB repair by mediating acetylation of 'Lys-5' of histone H2AX (H2AXK5ac), promoting NBN/NBS1 assembly at the sites of DNA damage. The NuA4 complex plays a key role in hematopoietic stem cell maintenance and is required to maintain acetylated H2A.Z/H2AZ1 at MYC target genes. The NuA4 complex is also required for spermatid development by promoting acetylation of histones: histone hyperacetylation is required for histone replacement during the transition from round to elongating spermatids. Component of a SWR1-like complex that specifically mediates the removal of histone H2A.Z/H2AZ1 from the nucleosome. Also acetylates non-histone proteins, such as BMAL1, ATM, AURKB, CHKA, CGAS, ERCC4/XPF, LPIN1, TP53/p53, NDC80/HEC1, NR1D2, RAN, SOX4, FOXP3, SQSTM1, ULK1 and RUBCNL/Pacer. Directly acetylates and activates ATM. Promotes nucleotide excision repair (NER) by mediating acetylation of ERCC4/XPF, thereby promoting formation of the ERCC4-ERCC1 complex. Relieves NR1D2-mediated inhibition of APOC3 expression by acetylating NR1D2. Acts as a regulator of regulatory T-cells (Treg) by catalyzing FOXP3 acetylation, thereby promoting FOXP3 transcriptional repressor activity. Involved in skeletal myoblast differentiation by mediating acetylation of SOX4. Catalyzes acetylation of APBB1/FE65, increasing its transcription activator activity. Promotes transcription elongation during the activation phase of the circadian cycle by catalyzing acetylation of BMAL1, promoting elongation of circadian transcripts. Together with GSK3 (GSK3A or GSK3B), acts as a regulator of autophagy: phosphorylated at Ser-86 by GSK3 under starvation conditions, leading to activate acetyltransferase activity and promote acetylation of key autophagy regulators, such as ULK1 and RUBCNL/Pacer. Acts as a regulator of the cGAS-STING innate antiviral response by catalyzing acetylation the N-terminus of CGAS, thereby promoting CGAS DNA-binding and activation. Also regulates lipid metabolism by mediating acetylation of CHKA or LPIN1. Promotes lipolysis of lipid droplets following glucose deprivation by mediating acetylation of isoform 1 of CHKA, thereby promoting monomerization of CHKA and its conversion into a tyrosine-protein kinase. Acts as a regulator of fatty-acid-induced triacylglycerol synthesis by catalyzing acetylation of LPIN1, thereby promoting the synthesis of diacylglycerol. In addition to protein acetyltransferase, can use different acyl-CoA substrates, such as (2E)-butenoyl-CoA (crotonyl-CoA), S-lactoyl-CoA (lactyl-CoA) and 2-hydroxyisobutanoyl-CoA (2-hydroxyisobutyryl-CoA), and is able to mediate protein crotonylation, lactylation and 2-hydroxyisobutyrylation, respectively. Acts as a key regulator of chromosome segregation and kinetochore-microtubule attachment during mitosis by mediating acetylation or crotonylation of target proteins. Catalyzes acetylation of AURKB at kinetochores, increasing AURKB activity and promoting accurate chromosome segregation in mitosis. Acetylates RAN during mitosis, promoting microtubule assembly at mitotic chromosomes. Acetylates NDC80/HEC1 during mitosis, promoting robust kinetochore-microtubule attachment. Catalyzes crotonylation of MAPRE1/EB1, thereby ensuring accurate spindle positioning in mitosis. Catalyzes lactylation of NBN/NBS1 in response to DNA damage, thereby promoting DNA double-strand breaks (DSBs) via homologous recombination (HR). Its function is as follows. (Microbial infection) Catalyzes the acetylation of flavivirus NS3 protein to modulate their RNA-binding and -unwinding activities leading to facilitate viral replication. The polypeptide is Histone acetyltransferase KAT5 (Homo sapiens (Human)).